Reading from the N-terminus, the 105-residue chain is Large ribosomal subunit protein uL24 (105 aa).

This sequence belongs to the universal ribosomal protein uL24 family. As to quaternary structure, part of the 50S ribosomal subunit.

One of two assembly initiator proteins, it binds directly to the 5'-end of the 23S rRNA, where it nucleates assembly of the 50S subunit. Its function is as follows. One of the proteins that surrounds the polypeptide exit tunnel on the outside of the subunit. The chain is Large ribosomal subunit protein uL24 from Lachnoclostridium phytofermentans (strain ATCC 700394 / DSM 18823 / ISDg) (Clostridium phytofermentans).